The following is a 291-amino-acid chain: Mitochondrial thiamine pyrophosphate carrier 1 (291 aa).

A run of 6 helical transmembrane segments spans residues 12 to 31, 83 to 99, 120 to 141, 167 to 191, 214 to 230, and 265 to 282; these read GATA…GAVA, IMYI…YSMF, SLIV…FDLL, GGLA…GLMF, FCGF…TFPL, and GFGI…VSLF. 3 Solcar repeats span residues 15 to 102, 115 to 200, and 207 to 290; these read ASVY…FSKA, RPSN…AREV, and NIPF…VLNG.

It belongs to the mitochondrial carrier (TC 2.A.29) family.

It is found in the mitochondrion inner membrane. Functionally, mitochondrial transporter that mediates uptake of thiamine pyrophosphate (ThPP) into mitochondria. This Meyerozyma guilliermondii (strain ATCC 6260 / CBS 566 / DSM 6381 / JCM 1539 / NBRC 10279 / NRRL Y-324) (Yeast) protein is Mitochondrial thiamine pyrophosphate carrier 1 (TPC1).